We begin with the raw amino-acid sequence, 180 residues long: Large ribosomal subunit protein uL10 (180 aa).

Residues 161–180 form a disordered region; sequence SKAEGSEETESNETTETVEE. Positions 166–180 are enriched in acidic residues; that stretch reads SEETESNETTETVEE.

It belongs to the universal ribosomal protein uL10 family. Part of the ribosomal stalk of the 50S ribosomal subunit. The N-terminus interacts with L11 and the large rRNA to form the base of the stalk. The C-terminus forms an elongated spine to which L12 dimers bind in a sequential fashion forming a multimeric L10(L12)X complex.

Forms part of the ribosomal stalk, playing a central role in the interaction of the ribosome with GTP-bound translation factors. The polypeptide is Large ribosomal subunit protein uL10 (Finegoldia magna (strain ATCC 29328 / DSM 20472 / WAL 2508) (Peptostreptococcus magnus)).